Consider the following 58-residue polypeptide: Large ribosomal subunit protein uL30 (58 aa).

This sequence belongs to the universal ribosomal protein uL30 family. Part of the 50S ribosomal subunit.

This chain is Large ribosomal subunit protein uL30, found in Wigglesworthia glossinidia brevipalpis.